The sequence spans 309 residues: Ribosomal RNA small subunit methyltransferase H (309 aa).

Residues 33 to 35 (GGH), Asp-53, Phe-79, Asp-100, and Gln-107 contribute to the S-adenosyl-L-methionine site.

It belongs to the methyltransferase superfamily. RsmH family.

Its subcellular location is the cytoplasm. It carries out the reaction cytidine(1402) in 16S rRNA + S-adenosyl-L-methionine = N(4)-methylcytidine(1402) in 16S rRNA + S-adenosyl-L-homocysteine + H(+). Specifically methylates the N4 position of cytidine in position 1402 (C1402) of 16S rRNA. The polypeptide is Ribosomal RNA small subunit methyltransferase H (Clostridium botulinum (strain Kyoto / Type A2)).